A 250-amino-acid polypeptide reads, in one-letter code: Beta-crystallin B1 (250 aa).

Over residues 1–13 (MSQAAKASATTAV) the composition is skewed to polar residues. The interval 1–49 (MSQAAKASATTAVNPGPDGKGKGAPSTGPAPAPGPTPVPASVPRPAAKV) is disordered. Position 2 is an N-acetylserine (Ser-2). The N-terminal arm stretch occupies residues 2 to 56 (SQAAKASATTAVNPGPDGKGKGAPSTGPAPAPGPTPVPASVPRPAAKVGDLPPGS). The span at 28–42 (GPAPAPGPTPVPASV) shows a compositional bias: pro residues. Beta/gamma crystallin 'Greek key' domains lie at 57–96 (YRLI…IVVS) and 97–141 (GPWV…RPIR). Positions 142–146 (MDSQE) are connecting peptide. 2 Beta/gamma crystallin 'Greek key' domains span residues 147–188 (HKIC…TVSG) and 189–231 (GTWV…RRLR). A C-terminal arm region spans residues 233–250 (RQWHQEGCFPVLTAEPPK).

This sequence belongs to the beta/gamma-crystallin family. As to quaternary structure, homo/heterodimer, or complexes of higher-order. The structure of beta-crystallin oligomers seems to be stabilized through interactions between the N-terminal arms. In terms of processing, specific cleavages in the N-terminal arm occur during lens maturation and give rise to truncated forms, leading to impaired oligomerization and protein insolubilization. The protease responsible for this partial degradation could be calpain II.

Its function is as follows. Crystallins are the dominant structural components of the vertebrate eye lens. The protein is Beta-crystallin B1 (Crybb1) of Mus musculus (Mouse).